Consider the following 281-residue polypeptide: Diaminopimelate epimerase (281 aa).

Substrate contacts are provided by Asn-13, Gln-46, and Asn-66. Cys-75 (proton donor) is an active-site residue. Substrate is bound by residues 76-77 (GN), Asn-160, Asn-193, and 211-212 (ER). The active-site Proton acceptor is the Cys-220. 221-222 (GT) provides a ligand contact to substrate.

Belongs to the diaminopimelate epimerase family. As to quaternary structure, homodimer.

The protein resides in the cytoplasm. It carries out the reaction (2S,6S)-2,6-diaminopimelate = meso-2,6-diaminopimelate. It functions in the pathway amino-acid biosynthesis; L-lysine biosynthesis via DAP pathway; DL-2,6-diaminopimelate from LL-2,6-diaminopimelate: step 1/1. Catalyzes the stereoinversion of LL-2,6-diaminopimelate (L,L-DAP) to meso-diaminopimelate (meso-DAP), a precursor of L-lysine and an essential component of the bacterial peptidoglycan. The chain is Diaminopimelate epimerase from Acinetobacter baumannii (strain ATCC 17978 / DSM 105126 / CIP 53.77 / LMG 1025 / NCDC KC755 / 5377).